The sequence spans 367 residues: Voltage-gated potassium channel subunit beta-2 (367 aa).

3 positions are modified to phosphoserine: Ser-9, Ser-14, and Ser-20. Asymmetric dimethylarginine; alternate is present on Arg-28. Arg-28 is modified (omega-N-methylarginine; alternate). Ser-31 carries the phosphoserine modification. Positions 56, 57, 63, and 85 each coordinate NADP(+). Tyr-90 serves as the catalytic Proton donor/acceptor. Ser-112 carries the phosphoserine modification. Position 124 is an N6-acetyllysine (Lys-124). 18 residues coordinate NADP(+): Asn-158, Ser-188, Arg-189, Gln-214, Trp-243, Ser-244, Pro-245, Leu-246, Ala-247, Cys-248, Lys-254, Tyr-262, Arg-264, Gly-323, Ser-325, Gln-329, Glu-332, and Asn-333.

This sequence belongs to the shaker potassium channel beta subunit family. As to quaternary structure, homotetramer. Interaction with tetrameric potassium channel alpha subunits gives rise to a heterooctamer. Identified in potassium channel complexes containing KCNA1, KCNA2, KCNA4, KCNA5, KCNA6, KCNAB1, KCNAB2 and KCND3. Interacts (in unphosphorylated form) with MAPRE1. Forms a ternary complex with SQSTM1 and PRKCZ. Phosphorylated by PRKCZ; may be regulated by incorporation in a complex composed of PRKCZ and SQSTM1. In terms of tissue distribution, detected in brain. Detected at basket cell terminals in cerebellum and in the juxtaparanodal region of nodes of Ranvier (at protein level). Strongest expression in brain and eye. Highest levels in brain detected in brainstem and diencephalon. Strong expression also detected in lung and heart. Moderate expression in kidney, T-lymphocytes and skeletal muscle.

The protein localises to the cytoplasm. It localises to the membrane. The protein resides in the cell membrane. It is found in the cell projection. Its subcellular location is the axon. The protein localises to the synapse. It localises to the synaptosome. The protein resides in the cytoskeleton. It catalyses the reaction hydroxyacetone + NADP(+) = methylglyoxal + NADPH + H(+). It carries out the reaction (E)-4-oxonon-2-en-1-ol + NADP(+) = (E)-4-oxonon-2-enal + NADPH + H(+). Functionally, regulatory subunit of the voltage-gated potassium (Kv) Shaker channel family. Shaker channels are composed of pore-forming and potassium-conducting alpha subunits and of regulatory beta subunits. The beta-2/KCNAB2 subunit promotes potassium channel closure via a mechanism that does not involve physical obstruction of the channel pore. Promotes the inactivation of Kv1.4/KCNA4 and Kv1.5/KCNA5 alpha subunit-containing channels. Displays nicotinamide adenine dinucleotide phosphate (NADPH)-dependent aldoketoreductase activity by catalyzing the NADPH-dependent reduction of a wide range of aldehyde and ketone substrates. Substrate specificity includes methylglyoxal, 9,10-phenanthrenequinone, prostaglandin J2, 4-nitrobenzaldehyde, 4-nitroacetophenone and 4-oxo-trans-2-nonenal (in vitro, no physiological substrate identified yet). The binding of oxidized and reduced nucleotide cofactors alters Kv channel gating and may contribute to dynamic fine tuning of cell excitability. Contributes to the regulation of nerve signaling, and prevents neuronal hyperexcitability. The chain is Voltage-gated potassium channel subunit beta-2 from Mus musculus (Mouse).